We begin with the raw amino-acid sequence, 372 residues long: L-selectin (372 aa).

A signal peptide spans 1-28 (MVFPWRCQSAQRGSWSFLKLWIRTLLCC). A propeptide spanning residues 29–38 (DLLPHHGTHC) is cleaved from the precursor. Residues 39 to 332 (WTYHYSERSM…FSKIKEGDYN (294 aa)) lie on the Extracellular side of the membrane. The 101-residue stretch at 55–155 (KFCKHNYTDL…ACHKRKAALC (101 aa)) folds into the C-type lectin domain. 10 disulfide bridges follow: Cys57-Cys155, Cys128-Cys147, Cys128-Cys160, Cys160-Cys171, Cys165-Cys180, Cys182-Cys191, Cys197-Cys241, Cys227-Cys254, Cys259-Cys303, and Cys289-Cys316. 2 N-linked (GlcNAc...) asparagine glycosylation sites follow: Asn60 and Asn104. Ca(2+) is bound by residues Glu118, Asn120, Glu126, Asn143, and Asp144. The EGF-like domain maps to 156–192 (YTASCQPESCNRHGECVETINNNTCICDPGYYGPQCQ). Asn177 is a glycosylation site (N-linked (GlcNAc...) asparagine). 2 Sushi domains span residues 195-256 (IQCE…ICQV) and 257-318 (IQCM…ICQK). 3 N-linked (GlcNAc...) asparagine glycosylation sites follow: Asn226, Asn246, and Asn278. Residues 333–355 (PLFIPVAVMVTAFSGLAFIIWLA) traverse the membrane as a helical segment. Residues 356–372 (RRLKKGKKSQERMDDPY) lie on the Cytoplasmic side of the membrane.

This sequence belongs to the selectin/LECAM family. Interaction with SELPLG/PSGL1 and PODXL2 is required for promoting recruitment and rolling of leukocytes. This interaction is dependent on the sialyl Lewis X glycan modification of SELPLG and PODXL2, and tyrosine sulfation modifications of SELPLG. Sulfation on 'Tyr-51' of SELPLG is important for L-selectin binding. N-glycosylated. As to expression, expressed in peripheral blood mononuclear cells (PBMC), spleen and thymus.

The protein resides in the cell membrane. In terms of biological role, calcium-dependent lectin that mediates cell adhesion by binding to glycoproteins on neighboring cells. Mediates the adherence of lymphocytes to endothelial cells of high endothelial venules in peripheral lymph nodes. Promotes initial tethering and rolling of leukocytes in endothelia. The sequence is that of L-selectin (Sell) from Rattus norvegicus (Rat).